The following is a 191-amino-acid chain: GTP-binding protein CIN4 (191 aa).

GTP is bound by residues 23–30 (GLDNSGKS), 69–73 (DIGGQ), and 131–134 (NKID).

Functionally, implicated in yeast microtubule function. This Saccharomyces cerevisiae (strain ATCC 204508 / S288c) (Baker's yeast) protein is GTP-binding protein CIN4 (CIN4).